The following is a 346-amino-acid chain: Probable dual-specificity RNA methyltransferase RlmN (346 aa).

E91 acts as the Proton acceptor in catalysis. The Radical SAM core domain occupies T97 to E325. C104 and C330 are joined by a disulfide. Positions 111, 115, and 118 each coordinate [4Fe-4S] cluster. S-adenosyl-L-methionine-binding positions include G158 to E159, S188, S211 to H213, and N287. C330 functions as the S-methylcysteine intermediate in the catalytic mechanism.

Belongs to the radical SAM superfamily. RlmN family. [4Fe-4S] cluster serves as cofactor.

It is found in the cytoplasm. The enzyme catalyses adenosine(2503) in 23S rRNA + 2 reduced [2Fe-2S]-[ferredoxin] + 2 S-adenosyl-L-methionine = 2-methyladenosine(2503) in 23S rRNA + 5'-deoxyadenosine + L-methionine + 2 oxidized [2Fe-2S]-[ferredoxin] + S-adenosyl-L-homocysteine. It carries out the reaction adenosine(37) in tRNA + 2 reduced [2Fe-2S]-[ferredoxin] + 2 S-adenosyl-L-methionine = 2-methyladenosine(37) in tRNA + 5'-deoxyadenosine + L-methionine + 2 oxidized [2Fe-2S]-[ferredoxin] + S-adenosyl-L-homocysteine. Its function is as follows. Specifically methylates position 2 of adenine 2503 in 23S rRNA and position 2 of adenine 37 in tRNAs. The sequence is that of Probable dual-specificity RNA methyltransferase RlmN from Picosynechococcus sp. (strain ATCC 27264 / PCC 7002 / PR-6) (Agmenellum quadruplicatum).